A 317-amino-acid polypeptide reads, in one-letter code: Curved DNA-binding protein (317 aa).

The 65-residue stretch at 5-69 (DYYKILGVEP…QKRAEFDEIR (65 aa)) folds into the J domain.

It localises to the cytoplasm. The protein resides in the nucleoid. Its function is as follows. DNA-binding protein that preferentially recognizes a curved DNA sequence. It is probably a functional analog of DnaJ; displays overlapping activities with DnaJ, but functions under different conditions, probably acting as a molecular chaperone in an adaptive response to environmental stresses other than heat shock. Lacks autonomous chaperone activity; binds native substrates and targets them for recognition by DnaK. Its activity is inhibited by the binding of CbpM. The sequence is that of Curved DNA-binding protein from Pseudomonas putida (strain W619).